Consider the following 329-residue polypeptide: uncharacterized protein (329 aa).

The region spanning 27-185 is the Nudix hydrolase domain; it reads PRRASVAVII…IQIDSSRALK (159 aa). The next 3 membrane-spanning stretches (helical) occupy residues 123-143, 227-247, and 303-323; these read VITSNWGQFPLLLLSSFVFIL, PFLRGITHSIFVDLFIFLSPS, and LTLLVGFLFRLFLVYLLFLII.

The protein localises to the membrane. This is an uncharacterized protein from Schizosaccharomyces pombe (strain 972 / ATCC 24843) (Fission yeast).